The primary structure comprises 204 residues: MTTPHHGPLRVGIGGPVGSGKTALMEGLCKALRGRFDLCAITNDIYTKEDARLLTVAGALPEERIMGVETGGCPHTAIREDASINLAAVAEMRRRFPSLDLILIESGGDNLAATFSPELADLTLYVIDVAGGEKIPRKGGPGITRSDLLVINKTDLAPLVGADLAVMEADTQRMRGGRPYVFTSLRRGDGVEAVARFVIEAGGL.

Glycine 15–threonine 22 provides a ligand contact to GTP.

It belongs to the SIMIBI class G3E GTPase family. UreG subfamily. In terms of assembly, homodimer. UreD, UreF and UreG form a complex that acts as a GTP-hydrolysis-dependent molecular chaperone, activating the urease apoprotein by helping to assemble the nickel containing metallocenter of UreC. The UreE protein probably delivers the nickel.

It is found in the cytoplasm. Its function is as follows. Facilitates the functional incorporation of the urease nickel metallocenter. This process requires GTP hydrolysis, probably effectuated by UreG. In Methylobacterium sp. (strain 4-46), this protein is Urease accessory protein UreG.